A 476-amino-acid polypeptide reads, in one-letter code: Glutamyl-tRNA(Gln) amidotransferase subunit A (476 aa).

Residues K77 and S152 each act as charge relay system in the active site. S176 acts as the Acyl-ester intermediate in catalysis.

This sequence belongs to the amidase family. GatA subfamily. In terms of assembly, heterotrimer of A, B and C subunits.

It carries out the reaction L-glutamyl-tRNA(Gln) + L-glutamine + ATP + H2O = L-glutaminyl-tRNA(Gln) + L-glutamate + ADP + phosphate + H(+). In terms of biological role, allows the formation of correctly charged Gln-tRNA(Gln) through the transamidation of misacylated Glu-tRNA(Gln) in organisms which lack glutaminyl-tRNA synthetase. The reaction takes place in the presence of glutamine and ATP through an activated gamma-phospho-Glu-tRNA(Gln). This chain is Glutamyl-tRNA(Gln) amidotransferase subunit A, found in Acidobacterium capsulatum (strain ATCC 51196 / DSM 11244 / BCRC 80197 / JCM 7670 / NBRC 15755 / NCIMB 13165 / 161).